The chain runs to 403 residues: uncharacterized protein (403 aa).

A Zn(2+)-binding site is contributed by His81. Asp83 is an active-site residue. Asp114 serves as a coordination point for Zn(2+). Glu148 acts as the Proton acceptor in catalysis. Zn(2+) is bound by residues Glu149, Glu174, and His374.

The protein belongs to the peptidase M20A family. Zn(2+) is required as a cofactor. The cofactor is Co(2+).

This is an uncharacterized protein from Escherichia coli O157:H7.